The following is a 718-amino-acid chain: Polyribonucleotide nucleotidyltransferase (718 aa).

Mg(2+) contacts are provided by Asp-491 and Asp-497. One can recognise a KH domain in the interval 558-617 (PRMLTIKINPEKIRDVIGKGGATIRALTEETGTQIDISDDGTIVIASVDEGQAKEAQRRI). The 69-residue stretch at 627-695 (GQVYDGSVLR…EKGRLRLSVK (69 aa)) folds into the S1 motif domain.

The protein belongs to the polyribonucleotide nucleotidyltransferase family. The cofactor is Mg(2+).

The protein localises to the cytoplasm. The enzyme catalyses RNA(n+1) + phosphate = RNA(n) + a ribonucleoside 5'-diphosphate. Its function is as follows. Involved in mRNA degradation. Catalyzes the phosphorolysis of single-stranded polyribonucleotides processively in the 3'- to 5'-direction. This Bordetella avium (strain 197N) protein is Polyribonucleotide nucleotidyltransferase.